A 410-amino-acid chain; its full sequence is Divergent protein kinase domain 1C (410 aa).

At 1-19 (MARAAGERGRAARCGRWRR) the chain is on the cytoplasmic side. The May mediate ER retention motif lies at 18–19 (RR). The helical transmembrane segment at 20–40 (GALLAFAAWTAGWVLAAALLL) threads the bilayer. At 41–410 (RAHPSVLSER…TLKELQEAEK (370 aa)) the chain is on the lumenal side.

Belongs to the DIPK family. Among the many cysteines in the lumenal domain, most are probably involved in disulfide bonds. In terms of tissue distribution, mainly expressed in the brain and eye, some expression in kidney and skeletal muscle.

The protein localises to the endoplasmic reticulum membrane. The sequence is that of Divergent protein kinase domain 1C (Dipk1c) from Mus musculus (Mouse).